Here is a 538-residue protein sequence, read N- to C-terminus: Syncytin-1 (538 aa).

Residues 1 to 20 (MALPYHIFLFTVLLPSFTLT) form the signal peptide. Over 21–443 (APPPCRCMTS…NIGPWGLFSQ (423 aa)) the chain is Extracellular. Asparagine 169 is a glycosylation site (N-linked (GlcNAc...) asparagine). A CXXC motif is present at residues 186-189 (CWMC). Disulfide bonds link cysteine 186–cysteine 189, cysteine 186–cysteine 405, and cysteine 397–cysteine 404. 6 N-linked (GlcNAc...) asparagine glycosylation sites follow: asparagine 208, asparagine 214, asparagine 234, asparagine 242, asparagine 245, and asparagine 281. The fusion peptide stretch occupies residues 320–340 (ILPFVMAAGVLGALGTGIGGI). Residues 380 to 396 (LQNRRALDLLTAERGGT) form an immunosuppression region. Residues 397-405 (CLFLGEECC) carry the CX6CC motif. Residue asparagine 409 is glycosylated (N-linked (GlcNAc...) asparagine). The helical transmembrane segment at 444–464 (WMPWILPFLGPLAAIILLLLF) threads the bilayer. The essential for the fusiogenic function stretch occupies residues 465-484 (GPCIFNLLVNFVSSRIEAVK). Topologically, residues 465–538 (GPCIFNLLVN…LLRPNSAGSS (74 aa)) are cytoplasmic. Residues 501 to 538 (PLDWPASPRSDVNDIKGTPPEEISTAQPLLRPNSAGSS) form a disordered region.

Belongs to the gamma type-C retroviral envelope protein family. HERV class-I W env subfamily. The mature envelope protein (Env) consists of a trimer of SU-TM heterodimers attached probably by a labile interchain disulfide bond. Interacts with the C-type lectin CD209/DC-SIGN. Post-translationally, specific enzymatic cleavages in vivo yield mature proteins. Envelope glycoproteins are synthesized as an inactive precursor that is heavily N-glycosylated and processed likely by furin in the Golgi to yield the mature SU and TM proteins. The cleavage site between SU and TM requires the minimal sequence [KR]-X-[KR]-R. The CXXC motif is highly conserved across a broad range of retroviral envelope proteins. It is thought to participate in the formation of a labile disulfide bond possibly with the CX6CC motif present in the transmembrane protein.

It localises to the cell membrane. Its subcellular location is the virion. Its function is as follows. This endogenous retroviral envelope protein has retained its original fusogenic properties and participates in trophoblast fusion and the formation of a syncytium during placenta morphogenesis. May recognize and induce fusion through binding of SLC1A4 and SLC1A5. In terms of biological role, endogenous envelope proteins may have kept, lost or modified their original function during evolution. Retroviral envelope proteins mediate receptor recognition and membrane fusion during early infection. The surface protein (SU) mediates receptor recognition, while the transmembrane protein (TM) acts as a class I viral fusion protein. The protein may have at least 3 conformational states: pre-fusion native state, pre-hairpin intermediate state, and post-fusion hairpin state. During viral and target cell membrane fusion, the coiled coil regions (heptad repeats) assume a trimer-of-hairpins structure, positioning the fusion peptide in close proximity to the C-terminal region of the ectodomain. The formation of this structure appears to drive apposition and subsequent fusion of membranes. The sequence is that of Syncytin-1 (ERVW-1) from Pongo pygmaeus (Bornean orangutan).